A 330-amino-acid polypeptide reads, in one-letter code: GMP reductase (330 aa).

Catalysis depends on C180, which acts as the Thioimidate intermediate. Residue 209–232 (LIADGGIRHNGDIAKSVRFGASMV) participates in NADP(+) binding.

This sequence belongs to the IMPDH/GMPR family. GuaC type 2 subfamily.

It catalyses the reaction IMP + NH4(+) + NADP(+) = GMP + NADPH + 2 H(+). Catalyzes the irreversible NADPH-dependent deamination of GMP to IMP. It functions in the conversion of nucleobase, nucleoside and nucleotide derivatives of G to A nucleotides, and in maintaining the intracellular balance of A and G nucleotides. This chain is GMP reductase, found in Lactobacillus acidophilus (strain ATCC 700396 / NCK56 / N2 / NCFM).